An 83-amino-acid polypeptide reads, in one-letter code: MSSGGLLLLLGLLTLWEVLTPVSSKDHPKFCELPADTGSCKGNVPRFYYNADHHQCLKFIYGGCGGNANNFKTIEECKSTCAA.

The signal sequence occupies residues 1–24 (MSSGGLLLLLGLLTLWEVLTPVSS). The 51-residue stretch at 31–81 (CELPADTGSCKGNVPRFYYNADHHQCLKFIYGGCGGNANNFKTIEECKSTC) folds into the BPTI/Kunitz inhibitor domain. Intrachain disulfides connect Cys31–Cys81, Cys40–Cys64, and Cys56–Cys77.

The protein belongs to the venom Kunitz-type family. In terms of tissue distribution, expressed by the venom gland.

The protein localises to the secreted. Serine protease inhibitor. Does not inhibit plasmin, and does not reduce blood loss in the mouse tail vein blood loss model. The protein is Kunitz-type serine protease inhibitor textilinin-4 of Pseudonaja textilis textilis (Eastern brown snake).